The primary structure comprises 481 residues: Dynein axonemal assembly factor 8 (481 aa).

Disordered regions lie at residues 70 to 91 (DESG…LVPG), 131 to 233 (LDTK…EGRP), 306 to 397 (TWKV…PVAS), and 415 to 454 (RAFR…KKHI). Phosphoserine is present on residues serine 83, serine 145, and serine 147. Over residues 144-155 (GSQSPPWSSQGE) the composition is skewed to polar residues. Residues 163–176 (GKLKTEPSDTDFKN) are compositionally biased toward basic and acidic residues. The segment covering 177–188 (SAKRRALRRERR) has biased composition (basic residues). A compositionally biased stretch (polar residues) spans 198–211 (KVTQAAQNPASGDQ). Residues 310-322 (SADKLQDTEEQVA) show a composition bias toward basic and acidic residues. The span at 323–336 (RTRSASAESGFQTE) shows a compositional bias: polar residues. Serine 328 bears the Phosphoserine mark. 2 stretches are compositionally biased toward basic and acidic residues: residues 337-349 (RVQK…RLKT) and 359-380 (RLTE…HSSS).

The protein resides in the dynein axonemal particle. It is found in the cytoplasm. In cyliated cells, dynein axonemal particle-specific protein required for deployment of ODA to the axoneme. Interacts with outer dynein arm (ODA) subunits. The protein is Dynein axonemal assembly factor 8 (Dnaaf8) of Rattus norvegicus (Rat).